The following is a 152-amino-acid chain: Nuclear cap-binding protein subunit 2 (152 aa).

MRNA contacts are provided by residues Tyr8, Tyr31, 100-104 (RTDWD), 111-115 (RQFGR), and 121-122 (QV). One can recognise an RRM domain in the interval 28 to 106 (TTLYVGNMSF…RIIRTDWDAG (79 aa)).

It belongs to the RRM NCBP2 family. In terms of assembly, component of the nuclear cap-binding complex (CBC), a heterodimer composed of Cbp80 and Cbp20 that interacts with m7GpppG-capped RNA.

It localises to the nucleus. In terms of biological role, component of the cap-binding complex (CBC), which binds co-transcriptionally to the 5' cap of pre-mRNAs and is involved in various processes such as pre-mRNA splicing and RNA-mediated gene silencing (RNAi). The CBC complex is involved in miRNA-mediated RNA interference and is required for primary microRNAs (miRNAs) processing. Also involved in innate immunity via the short interfering RNAs (siRNAs) processing machinery by restricting the viral RNA production. In the CBC complex, Cbp20 recognizes and binds capped RNAs (m7GpppG-capped RNA) but requires Cbp80 to stabilize the movement of its N-terminal loop and lock the CBC into a high affinity cap-binding state with the cap structure. The sequence is that of Nuclear cap-binding protein subunit 2 (Cbp20) from Ixodes scapularis (Black-legged tick).